The sequence spans 491 residues: Glycogen synthase 1 (491 aa).

Residue Lys15 participates in ADP-alpha-D-glucose binding.

It belongs to the glycosyltransferase 1 family. Bacterial/plant glycogen synthase subfamily.

The enzyme catalyses [(1-&gt;4)-alpha-D-glucosyl](n) + ADP-alpha-D-glucose = [(1-&gt;4)-alpha-D-glucosyl](n+1) + ADP + H(+). It participates in glycan biosynthesis; glycogen biosynthesis. Its function is as follows. Synthesizes alpha-1,4-glucan chains using ADP-glucose. The sequence is that of Glycogen synthase 1 from Synechococcus sp. (strain JA-3-3Ab) (Cyanobacteria bacterium Yellowstone A-Prime).